Here is a 1642-residue protein sequence, read N- to C-terminus: Cobra venom factor (1642 aa).

Positions 1-22 (MERMALYLVAALLIGFPGSSHG) are cleaved as a signal peptide. N153, N158, and N209 each carry an N-linked (GlcNAc...) asparagine glycan. Positions 516, 539, 540, and 542 each coordinate Mg(2+). 12 disulfide bridges follow: C544–C801, C609–C644, C677–C704, C678–C711, C691–C712, C857–C1492, C1340–C1468, C1368–C1437, C1485–C1490, C1497–C1569, C1516–C1640, and C1616–C1625. Positions 650–732 (RRRRSSVLLL…QRESELFLAR (83 aa)) are excised as a propeptide. Residues 654 to 732 (SSVLLLDSNA…QRESELFLAR (79 aa)) are C3a-like domain. The region spanning 677–712 (CCEDVMHENPMGYTCEKRAKYIQEGDACKAAFLECC) is the Anaphylatoxin-like domain. The segment at 736–747 (EDGFIADSDIIS) is factor B binding site. The propeptide occupies 985–1263 (HLIITPSGCG…VMAFQALAEY (279 aa)). A C3d-like domain region spans residues 985 to 1263 (HLIITPSGCG…VMAFQALAEY (279 aa)). Residues 993-996 (CGEQ) constitute a cross-link (isoglutamyl cysteine thioester (Cys-Gln)). Positions 1190–1253 (VLMAASTGRD…GETYGQTQAT (64 aa)) are factor H binding site. N1346 carries N-linked (GlcNAc...) asparagine glycosylation. One can recognise an NTR domain in the interval 1497-1640 (CSSLNHQERI…FSYTLTEFGC (144 aa)).

It belongs to the venom complement C3 homolog family. In terms of assembly, heterotrimer of alpha, beta and gamma chains; disulfide-linked. Is active with factor B in the presence of factor D. First processed by the removal of 4 Arg residues by furin-type protease, forming two chains, alpha and gamma/beta precursor, linked by a disulfide bond. Probably, the cobrin cleaves the C3a-like domain and then the C3d-like domain, generating the mature cobra venom factor (CVF). This mature CVF is composed of three chains: alpha, gamma and beta. Post-translationally, contains 3 N-linked oligosaccharide chains, two in the alpha-chain and one in the beta-chain. Glycosylation is not required for the biological activity. However, it contributes to the immunogenicity of CVF. The carbohydrate content is 7.4. The major oligosaccharide is a symmetric fucosylated biantennary complex-type chain with an unusual alpha-galactosylated Le(x) structure at its non-reducing end. In terms of tissue distribution, expressed by the venom gland.

The protein resides in the secreted. Functionally, complement-activating protein in cobra venom. It is a structural and functional analog of complement component C3b, the activated form of C3. It binds factor B (CFB), which is subsequently cleaved by factor D (CFD) to form the bimolecular complex CVF/Bb. CVF/Bb is a C3/C5 convertase that cleaves both complement components C3 and C5. Structurally, it resembles the C3b degradation product C3c, which is not able to form a C3/C5 convertase. Unlike C3b/Bb, CVF/Bb is a stable complex and completely resistant to the actions of complement regulatory factors H (CFH) and I (CFI). Therefore, CVF continuously activates complement resulting in the depletion of complement activity. This is Cobra venom factor from Naja kaouthia (Monocled cobra).